The sequence spans 20 residues: Cytochrome c oxidase subunit 7B-heart, mitochondrial (20 aa).

Belongs to the cytochrome c oxidase VIIb family. As to quaternary structure, component of the cytochrome c oxidase (complex IV, CIV), a multisubunit enzyme composed of 14 subunits. The complex is composed of a catalytic core of 3 subunits MT-CO1, MT-CO2 and MT-CO3, encoded in the mitochondrial DNA, and 11 supernumerary subunits COX4I, COX5A, COX5B, COX6A, COX6B, COX6C, COX7A, COX7B, COX7C, COX8 and NDUFA4, which are encoded in the nuclear genome. The complex exists as a monomer or a dimer and forms supercomplexes (SCs) in the inner mitochondrial membrane with NADH-ubiquinone oxidoreductase (complex I, CI) and ubiquinol-cytochrome c oxidoreductase (cytochrome b-c1 complex, complex III, CIII), resulting in different assemblies (supercomplex SCI(1)III(2)IV(1) and megacomplex MCI(2)III(2)IV(2)).

The protein resides in the mitochondrion inner membrane. It carries out the reaction 4 Fe(II)-[cytochrome c] + O2 + 8 H(+)(in) = 4 Fe(III)-[cytochrome c] + 2 H2O + 4 H(+)(out). Its pathway is energy metabolism; oxidative phosphorylation. In terms of biological role, component of the cytochrome c oxidase, the last enzyme in the mitochondrial electron transport chain which drives oxidative phosphorylation. The respiratory chain contains 3 multisubunit complexes succinate dehydrogenase (complex II, CII), ubiquinol-cytochrome c oxidoreductase (cytochrome b-c1 complex, complex III, CIII) and cytochrome c oxidase (complex IV, CIV), that cooperate to transfer electrons derived from NADH and succinate to molecular oxygen, creating an electrochemical gradient over the inner membrane that drives transmembrane transport and the ATP synthase. Cytochrome c oxidase is the component of the respiratory chain that catalyzes the reduction of oxygen to water. Electrons originating from reduced cytochrome c in the intermembrane space (IMS) are transferred via the dinuclear copper A center (CU(A)) of subunit 2 and heme A of subunit 1 to the active site in subunit 1, a binuclear center (BNC) formed by heme A3 and copper B (CU(B)). The BNC reduces molecular oxygen to 2 water molecules using 4 electrons from cytochrome c in the IMS and 4 protons from the mitochondrial matrix. The protein is Cytochrome c oxidase subunit 7B-heart, mitochondrial of Thunnus obesus (Bigeye tuna).